The primary structure comprises 226 residues: Endonuclease NucS (226 aa).

It belongs to the NucS endonuclease family.

The protein resides in the cytoplasm. Its function is as follows. Cleaves both 3' and 5' ssDNA extremities of branched DNA structures. This Mycobacterium tuberculosis (strain CDC 1551 / Oshkosh) protein is Endonuclease NucS.